The chain runs to 4138 residues: Fumosorinone synthetase (4138 aa).

The 441-residue stretch at 15-455 folds into the Ketosynthase family 3 (KS3) domain; sequence PEPIAIVGSA…GTNAHAIIER (441 aa). Catalysis depends on for beta-ketoacyl synthase activity residues Cys-189, His-328, and His-375. Positions 590–921 are malonyl-CoA:ACP transacylase (MAT) domain; that stretch reads VFTGQGAQWP…APDAVSFSTA (332 aa). An N-terminal hotdog fold region spans residues 990-1133; that stretch reads HELLGRRAVD…GLIDVHLGPR (144 aa). Residues 990–1306 form a dehydratase (DH) domain region; that stretch reads HELLGRRAVD…GFEVRSVGER (317 aa). In terms of domain architecture, PKS/mFAS DH spans 990–1309; that stretch reads HELLGRRAVD…VRSVGERDAA (320 aa). The active-site Proton acceptor; for dehydratase activity is the His-1022. The tract at residues 1157-1309 is C-terminal hotdog fold; the sequence is LQEIDCEKLY…VRSVGERDAA (153 aa). Catalysis depends on Asp-1216, which acts as the Proton donor; for dehydratase activity. The tract at residues 1456–1650 is methyltransferase (MT) domain; that stretch reads RFYAEDKGMQ…FSGADHVAHD (195 aa). Residues 2205 to 2379 are ketoreductase (KR) domain; sequence TYLMVGAAGG…AASIIHVGFV (175 aa). Residues 2507 to 2587 form the Carrier 1 domain; the sequence is EAAAAVRRAF…QLSTLAAKLA (81 aa). Ser-2547 carries the O-(pantetheine 4'-phosphoryl)serine modification. The segment at 2587 to 2683 is disordered; sequence ARQQSPRKEG…TEPKTEDKVS (97 aa). Over residues 2610 to 2621 the composition is skewed to basic and acidic residues; it reads TQDKLVDDKEQK. Over residues 2622–2643 the composition is skewed to polar residues; that stretch reads VQVTSSLAKADSLTQEMQASAH. Residues 2647 to 2659 show a composition bias toward low complexity; sequence DSATNPTPSSTAS. Positions 2664-2675 are enriched in polar residues; that stretch reads SNSQSTRSTSTE. The condensation (C) domain stretch occupies residues 2701–3128; the sequence is REAPMSAAQA…ASQRVRECAV (428 aa). Residues 3162-3564 form an adenylation (A) (KR) domain region; that stretch reads CQKNSARTAI…DGTLLCFGRI (403 aa). The 80-residue stretch at 3680–3759 folds into the Carrier 2 domain; the sequence is EKMTIQEGEL…GMTRCVLAQR (80 aa). Ser-3719 is modified (O-(pantetheine 4'-phosphoryl)serine). A reductase (RED) domain region spans residues 3813 to 4045; it reads LTGATGFLGG…LDFGTVDAVV (233 aa).

It in the C-terminal section; belongs to the NRP synthetase family.

Its function is as follows. Hybrid PKS-NRPS synthetase; part of the gene cluster that mediates the biosynthesis of fumosorinone, a 2-pyridone alkaloid that acts as an inhibitor of protein tyrosine phosphatase 1B which is implicated asa negative regulator of insulin receptor signaling and a potential drug target for the treatment of type II diabetes and other associated metabolic syndromes. The polyketide-amino acid backbone of fumosorinone is first assembled by the PKS-NRPS hybrid fumoS. The PKS modules condense one acetyl-CoA starter unit with 7 malonyl-CoA units, programmed C-methylations occurring after the first 3 and the sixth extensions, and cycles of full reduction occurring after the first 2 extensions. Because fumoS lacks a designated enoyl reductase (ER) domain, the required activity is provided the enoyl reductase fumoC. Upon formation of the polyketide backbone on the thiotemplate, the polyketide is transferred to the NRPS module and linked to tyrosine to produce the acyltetramic acid intermediate called prefumosorinone A. The cytochrome P450 monooxygenase fumoA then probably catalyzes an unprecedented oxidative ring expansion of prefumosorinone A to form prefumosorinone B which contains the 2-pyridone core of fumosorinone. The cytochrome P450 monooxygenase fumoB might hydroxylate the nitrogen of prefumosorinone B, but not the acyltetramic acid prefumosorinone A, to form fumosorinone. In Cordyceps fumosorosea (strain ARSEF 2679) (Isaria fumosorosea), this protein is Fumosorinone synthetase.